Here is a 126-residue protein sequence, read N- to C-terminus: UPF0235 protein C15orf40 homolog (126 aa).

The segment at 1-32 (MPKKAGATSKGKNQTKEPETAPPAAGPVATDP) is disordered. Serine 89 carries the post-translational modification Phosphoserine.

Belongs to the UPF0235 family.

The protein is UPF0235 protein C15orf40 homolog of Mus musculus (Mouse).